A 708-amino-acid chain; its full sequence is Leukotoxin translocation ATP-binding protein LktB (708 aa).

One can recognise a Peptidase C39 domain in the interval 1-126; that stretch reads MEANHQRNDL…ACYQGQLILV (126 aa). The ABC transmembrane type-1 domain occupies 155-437; it reads FLETLIVSIF…LAQLWQDFQQ (283 aa). The next 5 helical transmembrane spans lie at 159–179, 192–212, 270–290, 296–316, and 389–409; these read LIVS…FQVV, LNII…LSGL, ALTS…MWYY, LVIL…SPIL, and VMVI…LSIG. Residues 469–704 form the ABC transporter domain; the sequence is ISFKNIRFRY…SNGLYSYLHQ (236 aa). 503 to 510 serves as a coordination point for ATP; sequence GRSGSGKS.

The protein belongs to the ABC transporter superfamily. Protein-1 exporter (TC 3.A.1.109) family. In terms of assembly, homodimer.

Its subcellular location is the cell inner membrane. The catalysed reaction is ATP + H2O + proteinSide 1 = ADP + phosphate + proteinSide 2.. In terms of biological role, part of the ABC transporter complex LktBD involved in leukotoxin export. Transmembrane domains (TMD) form a pore in the inner membrane and the ATP-binding domain (NBD) is responsible for energy generation. This is Leukotoxin translocation ATP-binding protein LktB (lktB) from Mannheimia haemolytica (Pasteurella haemolytica).